The sequence spans 117 residues: UPF0321 protein PJ695.01c (117 aa).

The signal sequence occupies residues 1–17 (MLLLLYICCLFLKFILA). Asn-39, Asn-65, Asn-71, and Asn-104 each carry an N-linked (GlcNAc...) asparagine glycan.

The protein belongs to the UPF0321 family.

This Schizosaccharomyces pombe (strain 972 / ATCC 24843) (Fission yeast) protein is UPF0321 protein PJ695.01c.